Here is a 655-residue protein sequence, read N- to C-terminus: MGIFSIANQHIRFAVKLATAIVLALFVGFHFQLETPRWAVLTAAIVAAGPAFAAGGEPYSGAIRYRGFLRIIGTFIGCIAGLVIIIAMIRAPLLMILVCCIWAGFCTWISSLVRIENSYAWGLAGYTALIIVITIQPEPLLTPQFAVERCSEIVIGIVCAIMADLLFSPRSIKQEVDRELESLLVAQYQLMQLCIKHGDGEVVDKAWGDLVRRTTALQGMRSNLNMESSRWARANRRLKAINTLSLTLITQSCETYLIQNTRPELITDTFREFFDTPVETAQDVHKQLKRLRRVIAWTGERETPVTIYSWVAAATRYQLLKRGVISNTKINATEEEILQGEPEVKVESAERHHAMVNFWRTTLSCILGTLFWLWTGWTSGSGAMVMIAVVTSLAMRLPNPRMVAIDFIYGTLAALPLGLLYFLVIIPNTQQSMLLLCISLAVLGFFLGIEVQKRRLGSMGALASTINIIVLDNPMTFHFSQFLDSALGQIVGCVLAFTVILLVRDKSRDRTGRVLLNQFVSAAVSAMTTNVARRKENHLPALYQQLFLLMNKFPGDLPKFRLALTMIIAHQRLRDAPIPVNEDLSAFHRQMRRTADHVISARSDDKRRRYFGQLLEELEIYQEKLRIWQAPPQVTEPVNRLAGMLHKYQHALTDS.

A run of 11 helical transmembrane segments spans residues 13-33 (FAVK…HFQL), 38-58 (WAVL…GGEP), 69-89 (LRII…IAMI), 93-113 (LLMI…SSLV), 121-141 (WGLA…EPLL), 152-172 (EIVI…PRSI), 370-390 (LFWL…IAVV), 407-427 (FIYG…VIIP), 431-451 (QSML…GIEV), 459-479 (MGAL…TFHF), and 482-502 (FLDS…VILL).

Belongs to the aromatic acid exporter ArAE (TC 2.A.85) family.

It localises to the cell inner membrane. Its function is as follows. Forms an efflux pump with AaeA. Could function as a metabolic relief valve, allowing to eliminate certain compounds when they accumulate to high levels in the cell. This Escherichia coli (strain K12 / MC4100 / BW2952) protein is p-hydroxybenzoic acid efflux pump subunit AaeB.